A 500-amino-acid polypeptide reads, in one-letter code: Cytochrome P450 monooxygenase astJ (500 aa).

Cysteine 440 is a binding site for heme.

Belongs to the cytochrome P450 family. Requires heme as cofactor.

It participates in secondary metabolite biosynthesis; terpenoid biosynthesis. Cytochrome P450 monooxygenase; part of the gene cluster that mediates the biosynthesis of astellolides, drimane-type sesquiterpene esters that show antimicrobial, anti-inflammatory, and anti-tumor activities. The first step in astellolide biosynthesis is performed by the sesquiterpene cyclase astC that catalyzes the formation of drimanyl pyrophosphate from farnesyl pyrophosphate. Drimanyl pyrophosphate is then dephosphorylated by the sesquiterpene phosphatase astI to produce drimanyl monophosphate which is further dephosphorylated to drim-8-ene-11-ol by atsK. Drim-8-ene-11-ol is converted to confertifolin, probably by the cytochrome P450 monooxygenase astD and/or the dehydrogenase astE. The cytochrome P450 monooxygenases astB, astF and astJ then hydroxylate confertifolin at C6, C14, or C15 to form trihydroxy confertifolin. The nonribosomal peptide synthetase astA catalyzes ester bond formation between trihydroxy contifolin and benzoic acid (BA) or 4-hydroxy benzoic acid (4HBA), leading to the formation of dideacetyl astellolides A and B, respectively. Finally, the O-acetyltransferase astG converts dideacetyl astellolides A and B into deacetyl astellolides A and B. This Aspergillus oryzae (strain ATCC 42149 / RIB 40) (Yellow koji mold) protein is Cytochrome P450 monooxygenase astJ.